The sequence spans 333 residues: Transcription initiation factor IIB (333 aa).

The TFIIB-type zinc-finger motif lies at 33 to 64 (EIYRCPICGNDRFVYNYERGEVVCIVCGAVVQ). 4 residues coordinate Zn(2+): cysteine 37, cysteine 40, cysteine 56, and cysteine 59. 2 tandem repeats follow at residues 149-232 (QELE…LREL) and 243-324 (LYIS…ELAK).

The protein belongs to the TFIIB family.

Stabilizes TBP binding to an archaeal box-A promoter. Also responsible for recruiting RNA polymerase II to the pre-initiation complex (DNA-TBP-TFIIB). This Pyrobaculum arsenaticum (strain DSM 13514 / JCM 11321 / PZ6) protein is Transcription initiation factor IIB.